A 655-amino-acid chain; its full sequence is Squalene-tetrahymanol cyclase THC1 (655 aa).

Positions 1–20 (MKKILIGLIIGLFLFSSVNA) are cleaved as a signal peptide. 4 N-linked (GlcNAc...) asparagine glycosylation sites follow: Asn23, Asn44, Asn69, and Asn77. Asp373 serves as the catalytic Proton donor. PFTB repeat units follow at residues 393–435 (IPET…GIAN) and 515–562 (VQNS…GLLA).

This sequence belongs to the terpene cyclase/mutase family.

Its subcellular location is the membrane. It catalyses the reaction tetrahymanol = squalene + H2O. 2,3-iminosqualene and N,N-dimethyldodecylamine~N-oxlde are effective inhibitors with IC(50) values of 50 and 30 nM, respectively. Its function is as follows. Squalene cyclase that catalyzes the oxygen-independent cyclization of squalene into tetrahymanol, a triterpenoid sterol with five cyclohexyl rings that is involved in membrane integrity, permeability and fluidity. This is Squalene-tetrahymanol cyclase THC1 from Tetrahymena thermophila (strain SB210).